Here is a 436-residue protein sequence, read N- to C-terminus: Anaerobic glycerol-3-phosphate dehydrogenase subunit B (436 aa).

The protein belongs to the anaerobic G-3-P dehydrogenase subunit B family. As to quaternary structure, composed of a catalytic GlpA/B dimer and of membrane bound GlpC. Requires FMN as cofactor.

It catalyses the reaction a quinone + sn-glycerol 3-phosphate = dihydroxyacetone phosphate + a quinol. It participates in polyol metabolism; glycerol degradation via glycerol kinase pathway; glycerone phosphate from sn-glycerol 3-phosphate (anaerobic route): step 1/1. Its function is as follows. Conversion of glycerol 3-phosphate to dihydroxyacetone. Uses fumarate or nitrate as electron acceptor. The polypeptide is Anaerobic glycerol-3-phosphate dehydrogenase subunit B (Vibrio cholerae serotype O1 (strain ATCC 39315 / El Tor Inaba N16961)).